Reading from the N-terminus, the 223-residue chain is MDLASLRAQQIELASSVIREDRLDKDPPDLIAGADVGFEQGGEVTRAAMVLLKYPSLELVEYKVARIATTMPYIPGFLSFREYPALLAAWEMLSQKPDLVFVDGHGISHPRRLGVASHFGLLVDVPTIGVAKKRLCGKFEPLSSEPGALAPLMDKGEQLAWVWRSKARCNPLFIATGHRVSVDSALAWVQRCMKGYRLPEPTRWADAVASERPAFVRYTANQP.

Residues D35 and D103 each contribute to the Mg(2+) site.

The protein belongs to the endonuclease V family. Mg(2+) serves as cofactor.

It is found in the cytoplasm. It catalyses the reaction Endonucleolytic cleavage at apurinic or apyrimidinic sites to products with a 5'-phosphate.. DNA repair enzyme involved in the repair of deaminated bases. Selectively cleaves double-stranded DNA at the second phosphodiester bond 3' to a deoxyinosine leaving behind the intact lesion on the nicked DNA. The protein is Endonuclease V of Escherichia coli O45:K1 (strain S88 / ExPEC).